The sequence spans 530 residues: MEDDSLYLGGEWQFNHFSKLTSSRPDAAFAEIQRTSLPEKSPLSCETRVDLCDDLAPVARQLAPREKLPLSSRRPAAVGAGLQNMGNTCYVNASLQCLTYTPPLANYMLSREHSQTCHRHKGCMLCTMQAHITRALHNPGHVIQPSQALAAGFHRGKQEDAHEFLMFTVDAMKKACLPGHKQVDHHSKDTTLIHQIFGGYWRSQIKCLHCHGISDTFDPYLDIALDIQAAQSVQQALEQLVKPEELNGENAYHCGVCLQRAPASKTLTLHTSAKVLILVLKRFSDVTGNKIAKNVQYPECLDMQPYMSQQNTGPLVYVLYAVLVHAGWSCHNGHYFSYVKAQEGQWYKMDDAEVTASSITSVLSQQAYVLFYIQKSEWERHSESVSRGREPRALGAEDTDRRATQGELKRDHPCLQAPELDEHLVERATQESTLDHWKFLQEQNKTKPEFNVRKVEGTLPPDVLVIHQSKYKCGMKNHHPEQQSSLLKLSSTTPTHQESMNTGTLASLRGRARRSKGKNKHSKRALLVCQ.

The region spanning 80–375 (AGLQNMGNTC…QAYVLFYIQK (296 aa)) is the USP domain. The Nucleophile role is filled by cysteine 89. Histidine 334 (proton acceptor) is an active-site residue. 2 stretches are compositionally biased toward basic and acidic residues: residues 382–392 (SESVSRGREPR) and 398–412 (DTDRRATQGELKRDH). Disordered stretches follow at residues 382–412 (SESVSRGREPRALGAEDTDRRATQGELKRDH) and 476–530 (KNHH…LVCQ). The span at 484-495 (SSLLKLSSTTPT) shows a compositional bias: low complexity. Residues 496-505 (HQESMNTGTL) are compositionally biased toward polar residues. Basic residues predominate over residues 510–524 (GRARRSKGKNKHSKR).

It belongs to the peptidase C19 family. USP17 subfamily.

The protein localises to the nucleus. It localises to the endoplasmic reticulum. The enzyme catalyses Thiol-dependent hydrolysis of ester, thioester, amide, peptide and isopeptide bonds formed by the C-terminal Gly of ubiquitin (a 76-residue protein attached to proteins as an intracellular targeting signal).. Deubiquitinating enzyme that removes conjugated ubiquitin from specific proteins to regulate different cellular processes that may include cell proliferation, progression through the cell cycle, apoptosis, cell migration, and the cellular response to viral infection. The sequence is that of Ubiquitin carboxyl-terminal hydrolase 17-like protein 22 (USP17L22) from Homo sapiens (Human).